Consider the following 155-residue polypeptide: Small ribosomal subunit protein uS7c (155 aa).

This sequence belongs to the universal ribosomal protein uS7 family. As to quaternary structure, part of the 30S ribosomal subunit.

Its subcellular location is the plastid. The protein resides in the chloroplast. Its function is as follows. One of the primary rRNA binding proteins, it binds directly to 16S rRNA where it nucleates assembly of the head domain of the 30S subunit. This is Small ribosomal subunit protein uS7c (rps7) from Yucca glauca (Soapweed yucca).